The following is a 200-amino-acid chain: Endoribonuclease YbeY (200 aa).

Residues 1–18 show a composition bias toward pro residues; the sequence is MPADPALPDPVPPGPTAP. The segment at 1-22 is disordered; sequence MPADPALPDPVPPGPTAPVPTD. The Zn(2+) site is built by His151, His155, and His161.

The protein belongs to the endoribonuclease YbeY family. Requires Zn(2+) as cofactor.

It localises to the cytoplasm. Functionally, single strand-specific metallo-endoribonuclease involved in late-stage 70S ribosome quality control and in maturation of the 3' terminus of the 16S rRNA. The polypeptide is Endoribonuclease YbeY (Rhodospirillum rubrum (strain ATCC 11170 / ATH 1.1.1 / DSM 467 / LMG 4362 / NCIMB 8255 / S1)).